We begin with the raw amino-acid sequence, 544 residues long: Probable protein kinase UbiB (544 aa).

Positions 123-501 (EFDIKPLASA…KRQQATGKFL (379 aa)) constitute a Protein kinase domain. ATP is bound by residues 129-137 (LASASIAQV) and K152. D287 serves as the catalytic Proton acceptor. Helical transmembrane passes span 496 to 516 (ATGKFLFGVGATLVVCSAILV) and 519 to 539 (AYEQLSMASGIAGVTFWLLSW).

The protein belongs to the ABC1 family. UbiB subfamily.

The protein resides in the cell inner membrane. It functions in the pathway cofactor biosynthesis; ubiquinone biosynthesis [regulation]. In terms of biological role, is probably a protein kinase regulator of UbiI activity which is involved in aerobic coenzyme Q (ubiquinone) biosynthesis. The polypeptide is Probable protein kinase UbiB (Vibrio parahaemolyticus serotype O3:K6 (strain RIMD 2210633)).